Reading from the N-terminus, the 172-residue chain is Putative F-box protein At3g13825 (172 aa).

The F-box domain occupies 1-51 (MTTLSNLSVDLVGEIFSRVPLISLSEVRCTCTTWNTLSWNILSENYVFGKA).

The chain is Putative F-box protein At3g13825 from Arabidopsis thaliana (Mouse-ear cress).